Reading from the N-terminus, the 250-residue chain is Golgi SNAP receptor complex member 1 (250 aa).

At Ala2 the chain carries N-acetylalanine. Residues 2–229 (AAGTSNYWED…QRINLRKRRD (228 aa)) are Cytoplasmic-facing. A coiled-coil region spans residues 9-30 (WEDLRKQARQLENELDLKLVSF). Positions 37-59 (YSHSSARDGGRDRYSSDTTPLLN) are disordered. Residues 41 to 51 (SARDGGRDRYS) are compositionally biased toward basic and acidic residues. Positions 68–95 (ETMAIEIEQLLARLTGVNDKMAEYTHSA) form a coiled coil. Ser141 bears the Phosphoserine mark. A helical; Anchor for type IV membrane protein membrane pass occupies residues 230 to 250 (SLILGGVIGICTILLLLYAFH).

The protein belongs to the GOSR1 family. In terms of assembly, component of several multiprotein Golgi SNARE complexes. Identified in a SNARE complex with BET1, STX5 and YKT6, in a SNARE complex with BET1L, STX5 and YKT6, in a SNARE complex with STX5, GOSR2, SEC22B and BET1, and in complex with STX5 and COG3. Interacts with GABARAPL2. Interacts with the 34 kDa STX5 isoform.

It is found in the golgi apparatus membrane. Functionally, involved in transport from the ER to the Golgi apparatus as well as in intra-Golgi transport. It belongs to a super-family of proteins called t-SNAREs or soluble NSF (N-ethylmaleimide-sensitive factor) attachment protein receptor. May play a protective role against hydrogen peroxide induced cytotoxicity under glutathione depleted conditions in neuronal cells by regulating the intracellular ROS levels via inhibition of p38 MAPK (MAPK11, MAPK12, MAPK13 and MAPK14). Participates in docking and fusion stage of ER to cis-Golgi transport. Plays an important physiological role in VLDL-transport vesicle-Golgi fusion and thus in VLDL delivery to the hepatic cis-Golgi. This Rattus norvegicus (Rat) protein is Golgi SNAP receptor complex member 1 (Gosr1).